The following is a 424-amino-acid chain: ATP-sensitive inward rectifier potassium channel 8 (424 aa).

Over 1–69 (MLARKSIIPE…IFTTLVDLKW (69 aa)) the chain is Cytoplasmic. Ser-6 is modified (phosphoserine). A helical transmembrane segment spans residues 70–94 (RHTLVIFTMSFLCSWLLFAIMWWLV). Topologically, residues 95–126 (AFAHGDIYAYMEKGTMEKSGLESAVCVTNVRS) are extracellular. The segment at residues 127 to 138 (FTSAFLFSIEVQ) is an intramembrane region (helical; Pore-forming). Positions 139-145 (VTIGFGG) form an intramembrane region, pore-forming. Positions 140-145 (TIGFGG) match the Selectivity filter motif. The Extracellular segment spans residues 146–154 (RMMTEECPL). A helical transmembrane segment spans residues 155–176 (AITVLILQNIVGLIINAVMLGC). At 177 to 424 (IFMKTAQAHR…PEGNQCPSES (248 aa)) the chain is on the cytoplasmic side. A disordered region spans residues 373-409 (ELSHQNSLRKRNSMRRNNSMRRNNSIRRNNSSLMVPK). The segment covering 387–404 (RRNNSMRRNNSIRRNNSS) has biased composition (low complexity).

It belongs to the inward rectifier-type potassium channel (TC 1.A.2.1) family. KCNJ8 subfamily. In terms of assembly, interacts with ABCC9.

The protein resides in the membrane. It carries out the reaction K(+)(in) = K(+)(out). Inward rectifier potassium channels are characterized by a greater tendency to allow potassium to flow into the cell rather than out of it. Their voltage dependence is regulated by the concentration of extracellular potassium; as external potassium is raised, the voltage range of the channel opening shifts to more positive voltages. The inward rectification is mainly due to the blockage of outward current by internal magnesium. This channel is activated by internal ATP and can be blocked by external barium. Can form a sulfonylurea-sensitive but ATP-insensitive potassium channel with ABCC9. This chain is ATP-sensitive inward rectifier potassium channel 8 (Kcnj8), found in Mus musculus (Mouse).